A 215-amino-acid chain; its full sequence is Cytochrome b6 (215 aa).

Residues 32 to 52 (VFYCFGGMTLTCFLVQLATGF) form a helical membrane-spanning segment. Residue cysteine 35 coordinates heme c. The heme b site is built by histidine 86 and histidine 100. 3 helical membrane passes run 90–110 (ASMM…TGGF), 116–136 (LTWI…VTGY), and 186–206 (LHTL…FLMI). The heme b site is built by histidine 187 and histidine 202.

It belongs to the cytochrome b family. PetB subfamily. The 4 large subunits of the cytochrome b6-f complex are cytochrome b6, subunit IV (17 kDa polypeptide, PetD), cytochrome f and the Rieske protein, while the 4 small subunits are PetG, PetL, PetM and PetN. The complex functions as a dimer. Heme b serves as cofactor. It depends on heme c as a cofactor.

It localises to the plastid. It is found in the chloroplast thylakoid membrane. Component of the cytochrome b6-f complex, which mediates electron transfer between photosystem II (PSII) and photosystem I (PSI), cyclic electron flow around PSI, and state transitions. In Cyanidium caldarium (Red alga), this protein is Cytochrome b6.